A 190-amino-acid polypeptide reads, in one-letter code: Protein GrpE (190 aa).

Positions 1–41 (MAKEKQEEQQKQTAPENEKAPKKDIKKEASDKKGDQTSKLK) are disordered.

The protein belongs to the GrpE family. As to quaternary structure, homodimer.

The protein resides in the cytoplasm. Its function is as follows. Participates actively in the response to hyperosmotic and heat shock by preventing the aggregation of stress-denatured proteins, in association with DnaK and GrpE. It is the nucleotide exchange factor for DnaK and may function as a thermosensor. Unfolded proteins bind initially to DnaJ; upon interaction with the DnaJ-bound protein, DnaK hydrolyzes its bound ATP, resulting in the formation of a stable complex. GrpE releases ADP from DnaK; ATP binding to DnaK triggers the release of the substrate protein, thus completing the reaction cycle. Several rounds of ATP-dependent interactions between DnaJ, DnaK and GrpE are required for fully efficient folding. In Limosilactobacillus reuteri (strain DSM 20016) (Lactobacillus reuteri), this protein is Protein GrpE.